The sequence spans 443 residues: Regulator of sigma E protease (443 aa).

H21 provides a ligand contact to Zn(2+). The active site involves E22. H25 contributes to the Zn(2+) binding site. Residues 98–118 traverse the membrane as a helical segment; it reads FVIIAGPLANFIFAIFAYWVI. PDZ domains lie at 106-185 and 198-287; these read ANFI…SPFN and NWTF…TPVR. The next 2 helical transmembrane spans lie at 369-389 and 423-443; these read LVYFLSFMALISVNLGIMNLF and IGAALLLSLTVFALFNDFLRL.

It belongs to the peptidase M50B family. In terms of assembly, interacts with RseA. The cofactor is Zn(2+).

Its subcellular location is the cell inner membrane. Functionally, a site-2 regulated intramembrane protease (S2P) that cleaves a peptide bond in the transmembrane region of RseA. Part of a regulated intramembrane proteolysis (RIP) cascade. Acts on DegS-cleaved RseA to release the cytoplasmic domain of RseA. This provides the cell with sigma-E (RpoE) activity through the proteolysis of RseA. The sequence is that of Regulator of sigma E protease (rsep) from Haemophilus influenzae (strain ATCC 51907 / DSM 11121 / KW20 / Rd).